The sequence spans 516 residues: 1-pyrroline-5-carboxylate dehydrogenase (516 aa).

Residues Glu287 and Cys321 contribute to the active site.

The protein belongs to the aldehyde dehydrogenase family. RocA subfamily.

The catalysed reaction is L-glutamate 5-semialdehyde + NAD(+) + H2O = L-glutamate + NADH + 2 H(+). Its pathway is amino-acid degradation; L-proline degradation into L-glutamate; L-glutamate from L-proline: step 2/2. The chain is 1-pyrroline-5-carboxylate dehydrogenase from Bacillus licheniformis (strain ATCC 14580 / DSM 13 / JCM 2505 / CCUG 7422 / NBRC 12200 / NCIMB 9375 / NCTC 10341 / NRRL NRS-1264 / Gibson 46).